We begin with the raw amino-acid sequence, 370 residues long: uncharacterized protein (370 aa).

Residues D152, H154, D184, N215, H306, and H308 each coordinate a divalent metal cation.

It belongs to the metallophosphoesterase superfamily. A divalent metal cation serves as cofactor.

This is an uncharacterized protein from Helicobacter pylori (strain ATCC 700392 / 26695) (Campylobacter pylori).